Here is a 397-residue protein sequence, read N- to C-terminus: Tyrosine--tRNA ligase (397 aa).

The 'HIGH' region signature appears at 41 to 50; it reads PTAPDLHLGH. Residues 225-229 carry the 'KMSKS' region motif; sequence KMSKS. K228 contacts ATP. The S4 RNA-binding domain occupies 340 to 396; it reads AFLADSGLAGSRGEAKRLIKQGALSLDGEKLDDPNTPLTAGEYVVRLGKKRFLRLIV.

The protein belongs to the class-I aminoacyl-tRNA synthetase family. TyrS type 2 subfamily. Homodimer.

It localises to the cytoplasm. The enzyme catalyses tRNA(Tyr) + L-tyrosine + ATP = L-tyrosyl-tRNA(Tyr) + AMP + diphosphate + H(+). In terms of biological role, catalyzes the attachment of tyrosine to tRNA(Tyr) in a two-step reaction: tyrosine is first activated by ATP to form Tyr-AMP and then transferred to the acceptor end of tRNA(Tyr). The protein is Tyrosine--tRNA ligase of Oleidesulfovibrio alaskensis (strain ATCC BAA-1058 / DSM 17464 / G20) (Desulfovibrio alaskensis).